We begin with the raw amino-acid sequence, 300 residues long: Bifunctional protein FolD (300 aa).

Residues 169 to 171 (GHS) and Ile-235 each bind NADP(+).

The protein belongs to the tetrahydrofolate dehydrogenase/cyclohydrolase family. In terms of assembly, homodimer.

The enzyme catalyses (6R)-5,10-methylene-5,6,7,8-tetrahydrofolate + NADP(+) = (6R)-5,10-methenyltetrahydrofolate + NADPH. It catalyses the reaction (6R)-5,10-methenyltetrahydrofolate + H2O = (6R)-10-formyltetrahydrofolate + H(+). Its pathway is one-carbon metabolism; tetrahydrofolate interconversion. Catalyzes the oxidation of 5,10-methylenetetrahydrofolate to 5,10-methenyltetrahydrofolate and then the hydrolysis of 5,10-methenyltetrahydrofolate to 10-formyltetrahydrofolate. This Rhodobacter capsulatus (strain ATCC BAA-309 / NBRC 16581 / SB1003) protein is Bifunctional protein FolD.